We begin with the raw amino-acid sequence, 149 residues long: Calmodulin (149 aa).

Residue Ala2 is modified to N-acetylalanine. EF-hand domains are found at residues Glu8–Asn43, Pro44–Asp79, Asp81–Lys116, and Leu117–Lys149. Asp21, Asp23, Asp25, Thr27, Glu32, Asp57, Asp59, Asn61, Thr63, Glu68, Asp94, Asp96, Asp98, Tyr100, Glu105, Asp130, Asp132, Asp134, Gln136, and Glu141 together coordinate Ca(2+).

The protein belongs to the calmodulin family.

It is found in the cytoplasm. Calmodulin mediates the control of a large number of enzymes, ion channels and other proteins by Ca(2+). Among the enzymes to be stimulated by the calmodulin-Ca(2+) complex are a number of protein kinases and phosphatases. This Plasmodium falciparum (isolate 3D7) protein is Calmodulin.